The primary structure comprises 347 residues: Sulfate/thiosulfate import ATP-binding protein CysA 1 (347 aa).

Residues 3 to 237 enclose the ABC transporter domain; the sequence is VRVESLRKEF…PVSPFVYGFI (235 aa). Residue 35–42 coordinates ATP; sequence GPSGSGKT.

This sequence belongs to the ABC transporter superfamily. Sulfate/tungstate importer (TC 3.A.1.6) family. In terms of assembly, the complex is composed of two ATP-binding proteins (CysA), two transmembrane proteins (CysT and CysW) and a solute-binding protein (CysP).

It localises to the cell inner membrane. The catalysed reaction is sulfate(out) + ATP + H2O = sulfate(in) + ADP + phosphate + H(+). It catalyses the reaction thiosulfate(out) + ATP + H2O = thiosulfate(in) + ADP + phosphate + H(+). Part of the ABC transporter complex CysAWTP involved in sulfate/thiosulfate import. Responsible for energy coupling to the transport system. This is Sulfate/thiosulfate import ATP-binding protein CysA 1 from Rhizobium meliloti (strain 1021) (Ensifer meliloti).